The following is a 111-amino-acid chain: uncharacterized protein (111 aa).

Residues 64–86 form a helical membrane-spanning segment; the sequence is VLCWLVLPLYCCNLLNLFFNIFL.

It localises to the membrane. This is an uncharacterized protein from Saccharomyces cerevisiae (strain ATCC 204508 / S288c) (Baker's yeast).